The following is a 140-amino-acid chain: Small ribosomal subunit protein uS19 (140 aa).

Belongs to the universal ribosomal protein uS19 family.

Protein S19 forms a complex with S13 that binds strongly to the 16S ribosomal RNA. The chain is Small ribosomal subunit protein uS19 from Natronomonas pharaonis (strain ATCC 35678 / DSM 2160 / CIP 103997 / JCM 8858 / NBRC 14720 / NCIMB 2260 / Gabara) (Halobacterium pharaonis).